We begin with the raw amino-acid sequence, 206 residues long: Small ribosomal subunit protein uS4 (206 aa).

The S4 RNA-binding domain occupies 93 to 156 (CRLDNLVYRL…RKIKIIAEAL (64 aa)).

The protein belongs to the universal ribosomal protein uS4 family. Part of the 30S ribosomal subunit. Contacts protein S5. The interaction surface between S4 and S5 is involved in control of translational fidelity.

One of the primary rRNA binding proteins, it binds directly to 16S rRNA where it nucleates assembly of the body of the 30S subunit. In terms of biological role, with S5 and S12 plays an important role in translational accuracy. The protein is Small ribosomal subunit protein uS4 of Protochlamydia amoebophila (strain UWE25).